A 1271-amino-acid polypeptide reads, in one-letter code: Breakpoint cluster region protein (1271 aa).

Position 1 is an N-acetylmethionine (M1). The interval 1-426 (MVDPVGFAEA…DGEGAFHGDA (426 aa)) is kinase. Positions 28–55 (VGDIEQELERCKASIRRLEQEVNQERFR) form a coiled coil. The segment at 67–173 (KKSYDRQRWG…GHGQPGADAE (107 aa)) is disordered. The segment covering 87–105 (ASEPRASASRPQPAPADGA) has biased composition (low complexity). S122 is modified (phosphoserine). The span at 123–138 (PGKARPGTARRPGAAA) shows a compositional bias: low complexity. At S139 the chain carries Phosphoserine. Y177 carries the phosphotyrosine; by HCK modification. The span at 185–198 (ERGLVKVNDKEVSD) shows a compositional bias: basic and acidic residues. Disordered stretches follow at residues 185–247 (ERGL…GDYE), 286–392 (GMME…HKRH), and 416–476 (NDGE…SRDA). The segment at 197-385 (SDRISSLGSQ…QSFDSSSPPT (189 aa)) is binding to ABL SH2-domain. The segment covering 199 to 208 (RISSLGSQAM) has biased composition (polar residues). Phosphoserine is present on residues S202, S215, S222, and S236. Y246 carries the post-translational modification Phosphotyrosine; by FES. Low complexity-rich tracts occupy residues 346–356 (SSGQSSRVSPS) and 369–382 (SPSQ…DSSS). A phosphoserine mark is found at S356, S377, and S382. Residue T385 is modified to Phosphothreonine. Residues 441-451 (DRAEEQRRHQD) show a composition bias toward basic and acidic residues. Phosphoserine is present on residues S459 and S463. R471 carries the post-translational modification Omega-N-methylarginine. A phosphoserine mark is found at S473 and S488. Residues 498–691 (MRKWVLSGIL…QNFLSSINEE (194 aa)) form the DH domain. Residue Y554 is modified to Phosphotyrosine. At T641 the chain carries Phosphothreonine. A Phosphotyrosine modification is found at Y644. At T693 the chain carries Phosphothreonine. The PH domain occupies 708–866 (QLLKDSFMVE…WRENIREQQK (159 aa)). In terms of domain architecture, C2 spans 893 to 1020 (HSIPLTINKE…QDRDWQRTVI (128 aa)). S894 is subject to Phosphoserine. The Rho-GAP domain occupies 1054-1248 (VKIAVVTKRE…VMSQVQVLLY (195 aa)). A Phosphoserine modification is found at S1264.

In terms of assembly, homotetramer. Interacts with PDZK1. May interact with CCPG1. Interacts with FES/FPS, ABL1, PIK3R1 and GRB2. Interacts with HCK. Interacts with SH2D5. Interacts with DLG4. In terms of processing, autophosphorylated. Phosphorylated by FES/FPS on tyrosine residues, leading to down-regulation of the BCR kinase activity. Phosphorylation at Tyr-177 by HCK is important for interaction with GRB2.

It is found in the postsynaptic density. The protein localises to the cell projection. The protein resides in the dendritic spine. It localises to the axon. Its subcellular location is the synapse. It carries out the reaction L-seryl-[protein] + ATP = O-phospho-L-seryl-[protein] + ADP + H(+). It catalyses the reaction L-threonyl-[protein] + ATP = O-phospho-L-threonyl-[protein] + ADP + H(+). Its function is as follows. Protein with a unique structure having two opposing regulatory activities toward small GTP-binding proteins. The C-terminus is a GTPase-activating protein (GAP) domain which stimulates GTP hydrolysis by RAC1, RAC2 and CDC42. Accelerates the intrinsic rate of GTP hydrolysis of RAC1 or CDC42, leading to down-regulation of the active GTP-bound form. The central Dbl homology (DH) domain functions as guanine nucleotide exchange factor (GEF) that modulates the GTPases CDC42, RHOA and RAC1. Promotes the conversion of CDC42, RHOA and RAC1 from the GDP-bound to the GTP-bound form. The amino terminus contains an intrinsic kinase activity. Functions as an important negative regulator of neuronal RAC1 activity. Regulates macrophage functions such as CSF1-directed motility and phagocytosis through the modulation of RAC1 activity. Plays a major role as a RHOA GEF in keratinocytes being involved in focal adhesion formation and keratinocyte differentiation. This chain is Breakpoint cluster region protein, found in Homo sapiens (Human).